The following is a 407-amino-acid chain: Digeranylgeranylglycerophospholipid reductase (407 aa).

Residues Ala-15, Glu-34, Cys-45, Ala-46, Gly-48, Arg-99, Ala-123, Asp-281, Gly-293, and Ile-294 each coordinate FAD.

This sequence belongs to the geranylgeranyl reductase family. DGGGPL reductase subfamily. FAD serves as cofactor.

It catalyses the reaction a 2,3-bis-O-phytanyl-sn-glycerol 1-phospholipid + 8 oxidized 2[4Fe-4S]-[ferredoxin] = a 2,3-bis-O-(geranylgeranyl)-sn-glycerol 1-phospholipid + 8 reduced 2[4Fe-4S]-[ferredoxin] + 16 H(+). The catalysed reaction is 2,3-bis-O-(phytanyl)-sn-glycerol 1-phosphate + 8 oxidized 2[4Fe-4S]-[ferredoxin] = 2,3-bis-O-(geranylgeranyl)-sn-glycerol 1-phosphate + 8 reduced 2[4Fe-4S]-[ferredoxin] + 16 H(+). It carries out the reaction a 2,3-bis-O-phytanyl-sn-glycerol 1-phospholipid + 8 A = a 2,3-bis-O-(geranylgeranyl)-sn-glycerol 1-phospholipid + 8 AH2. The enzyme catalyses CDP-2,3-bis-O-(geranylgeranyl)-sn-glycerol + 8 AH2 = CDP-2,3-bis-O-(phytanyl)-sn-glycerol + 8 A. It catalyses the reaction archaetidylserine + 8 AH2 = 2,3-bis-O-phytanyl-sn-glycero-3-phospho-L-serine + 8 A. Its pathway is membrane lipid metabolism; glycerophospholipid metabolism. Functionally, is involved in the reduction of 2,3-digeranylgeranylglycerophospholipids (unsaturated archaeols) into 2,3-diphytanylglycerophospholipids (saturated archaeols) in the biosynthesis of archaeal membrane lipids. Catalyzes the formation of archaetidic acid (2,3-di-O-phytanyl-sn-glyceryl phosphate) from 2,3-di-O-geranylgeranylglyceryl phosphate (DGGGP) via the hydrogenation of each double bond of the isoprenoid chains. Requires the adjacently encoded ferredoxin MA_1485 as the electron donor. Is also probably able to reduce double bonds of geranyl groups in CDP-2,3-bis-O-(geranylgeranyl)-sn-glycerol and archaetidylserine, thus acting at various stages in the biosynthesis of archaeal membrane lipids. This is Digeranylgeranylglycerophospholipid reductase from Methanosarcina acetivorans (strain ATCC 35395 / DSM 2834 / JCM 12185 / C2A).